A 284-amino-acid chain; its full sequence is MLSKQIPLGIYEKALPAGECWLERLQLAKTLGFDFVEMSVDETDDRLSRLDWSREQRLALVNAIVETGVRVPSMCLSAHRRFPLGSEDDAVRAQGLEIMRKAIQFAQDVGIRVIQLAGYDVYYQEANNETRRRFRDGLKESVEMASRAQVTLAMEIMDYPLMNSISKALGYAHYLNNPWFQLYPDIGNLSAWDNDVQMELQAGIGHIVAVHVKDTKPGVFKNVPFGEGVVDFERCFETLKQSGYCGPYLIEMWSETAEDPAAEVAKARDWVKARMAKAGMVEAA.

Belongs to the L-ribulose-5-phosphate 3-epimerase family.

It catalyses the reaction L-ribulose 5-phosphate = L-xylulose 5-phosphate. It functions in the pathway cofactor degradation; L-ascorbate degradation; D-xylulose 5-phosphate from L-ascorbate: step 3/4. Its function is as follows. Catalyzes the isomerization of L-xylulose-5-phosphate to L-ribulose-5-phosphate. Is involved in the anaerobic L-ascorbate utilization. The chain is L-ribulose-5-phosphate 3-epimerase UlaE from Escherichia coli O127:H6 (strain E2348/69 / EPEC).